A 364-amino-acid polypeptide reads, in one-letter code: Chorismate synthase (364 aa).

Arg-47 contributes to the NADP(+) binding site. FMN is bound by residues 124–126, Gly-287, 302–306, and Arg-328; these read RAS and KPTAT.

It belongs to the chorismate synthase family. In terms of assembly, homotetramer. The cofactor is FMNH2.

It catalyses the reaction 5-O-(1-carboxyvinyl)-3-phosphoshikimate = chorismate + phosphate. Its pathway is metabolic intermediate biosynthesis; chorismate biosynthesis; chorismate from D-erythrose 4-phosphate and phosphoenolpyruvate: step 7/7. In terms of biological role, catalyzes the anti-1,4-elimination of the C-3 phosphate and the C-6 proR hydrogen from 5-enolpyruvylshikimate-3-phosphate (EPSP) to yield chorismate, which is the branch point compound that serves as the starting substrate for the three terminal pathways of aromatic amino acid biosynthesis. This reaction introduces a second double bond into the aromatic ring system. This chain is Chorismate synthase, found in Prochlorococcus marinus subsp. pastoris (strain CCMP1986 / NIES-2087 / MED4).